The chain runs to 252 residues: Thiazole synthase (252 aa).

Lys91 (schiff-base intermediate with DXP) is an active-site residue. Residues Gly152, 179–180, and 201–202 contribute to the 1-deoxy-D-xylulose 5-phosphate site; these read AG and NT.

Belongs to the ThiG family. As to quaternary structure, homotetramer. Forms heterodimers with either ThiH or ThiS.

It localises to the cytoplasm. It catalyses the reaction [ThiS sulfur-carrier protein]-C-terminal-Gly-aminoethanethioate + 2-iminoacetate + 1-deoxy-D-xylulose 5-phosphate = [ThiS sulfur-carrier protein]-C-terminal Gly-Gly + 2-[(2R,5Z)-2-carboxy-4-methylthiazol-5(2H)-ylidene]ethyl phosphate + 2 H2O + H(+). Its pathway is cofactor biosynthesis; thiamine diphosphate biosynthesis. In terms of biological role, catalyzes the rearrangement of 1-deoxy-D-xylulose 5-phosphate (DXP) to produce the thiazole phosphate moiety of thiamine. Sulfur is provided by the thiocarboxylate moiety of the carrier protein ThiS. In vitro, sulfur can be provided by H(2)S. The chain is Thiazole synthase from Erwinia amylovora (Fire blight bacteria).